A 180-amino-acid polypeptide reads, in one-letter code: NAD(P)H-quinone oxidoreductase subunit J (180 aa).

Residues 1–16 (MNEETQTSELTNTDQG) are compositionally biased toward polar residues. The disordered stretch occupies residues 1 to 23 (MNEETQTSELTNTDQGPQIEPGP).

The protein belongs to the complex I 30 kDa subunit family. In terms of assembly, NDH-1 can be composed of about 15 different subunits; different subcomplexes with different compositions have been identified which probably have different functions.

It localises to the cellular thylakoid membrane. It catalyses the reaction a plastoquinone + NADH + (n+1) H(+)(in) = a plastoquinol + NAD(+) + n H(+)(out). The catalysed reaction is a plastoquinone + NADPH + (n+1) H(+)(in) = a plastoquinol + NADP(+) + n H(+)(out). NDH-1 shuttles electrons from an unknown electron donor, via FMN and iron-sulfur (Fe-S) centers, to quinones in the respiratory and/or the photosynthetic chain. The immediate electron acceptor for the enzyme in this species is believed to be plastoquinone. Couples the redox reaction to proton translocation, and thus conserves the redox energy in a proton gradient. Cyanobacterial NDH-1 also plays a role in inorganic carbon-concentration. In Prochlorococcus marinus (strain MIT 9211), this protein is NAD(P)H-quinone oxidoreductase subunit J.